The sequence spans 1339 residues: Transcription factor tau subunit sfc3 (1339 aa).

Residues Met470–Ser515 form a disordered region. The a.T hook DNA-binding region spans Pro485–Ile497. Positions Ala495–Pro514 are enriched in polar residues. Residues Ser595 and Ser596 each carry the phosphoserine modification. The interval Arg791 to Pro826 is disordered. The segment covering Glu798–Pro826 has biased composition (basic and acidic residues).

In terms of assembly, component of the TFIIIC complex including sfc1, sfc3, sfc4, sfc6 and sfc7. The subunits are organized in two globular domains, tauA and tauB, connected by a proteolysis-sensitive and flexible linker. Interacts with sfc1, sfc4 and sfc6.

Its subcellular location is the nucleus envelope. TFIIIC mediates tRNA and 5S RNA gene activation by binding to intragenic promoter elements. Upstream of the transcription start site, TFIIIC assembles the initiation complex TFIIIB-TFIIIC-tDNA, which is sufficient for RNA polymerase III recruitment and function. Part of the tauB domain of TFIIIC that binds boxB DNA promoter sites of tRNA and similar genes. Cooperates with sfc6 in DNA binding. Localizes to chromatin insulator sequence without recruiting RNA polymerase III and plays a role in nuclear organization. In Schizosaccharomyces pombe (strain 972 / ATCC 24843) (Fission yeast), this protein is Transcription factor tau subunit sfc3.